The chain runs to 156 residues: MWKRPDPQAKIKAGDRPQTCQSLALGSATESALPQALKLSDFQNFSVFEDISQHIKEVGAQLVKKVNAIFQLDITKDGKTILQWTIDLKNGAGDMYLGSARLPADTVFIIPDSVFTELVVGKINPQKAFLAGKFKVRGKVLLSQKLERIFREWAKI.

In terms of domain architecture, SCP2 spans 44–156; the sequence is NFSVFEDISQ…ERIFREWAKI (113 aa).

The sequence is that of SCP2 sterol-binding domain-containing protein 1 (Scp2d1) from Mus musculus (Mouse).